Here is a 180-residue protein sequence, read N- to C-terminus: Large ribosomal subunit protein uL6 (180 aa).

The protein belongs to the universal ribosomal protein uL6 family. As to quaternary structure, part of the 50S ribosomal subunit.

Functionally, this protein binds to the 23S rRNA, and is important in its secondary structure. It is located near the subunit interface in the base of the L7/L12 stalk, and near the tRNA binding site of the peptidyltransferase center. The chain is Large ribosomal subunit protein uL6 from Salinispora tropica (strain ATCC BAA-916 / DSM 44818 / JCM 13857 / NBRC 105044 / CNB-440).